The sequence spans 426 residues: MSKSENLYAQAQQLIPGGVNSPVRAFNGVGGVPLFIERANGAYLYDADGKAYIDYVGSWGPMVLGHNHPAIRNAVIDAAERGLSFGAPTEMEVKMAALVTELVPTMDMVRMVNSGTEATMSAIRLARGFTHRDKIIKFEGCYHGHADCLLVKAGSGALTLGQPNSPGVPADFAKHTLTCTYNDLASVRAAFEQYPQEIACIIVEPVAGNMNCVPPLPDFLPGLRALCDEFDALLIIDEVMTGFRVALAGAQAHYGVEPDLTCLGKIIGGGMPVGAFGGRREVMEALAPGGPVYQAGTLSGNPIAMAAGFACLTEVAQPGTHATLTELTNQLADGLLAAAKAENIPLVVNHVGGMFGLFFTDAASVTRYADVIRCDVERFKRFFHLMLAEGVYLAPSAFEAGFMSLAHGQAEIQHTIDAARRSFAKL.

N6-(pyridoxal phosphate)lysine is present on Lys-265.

Belongs to the class-III pyridoxal-phosphate-dependent aminotransferase family. HemL subfamily. Homodimer. Requires pyridoxal 5'-phosphate as cofactor.

Its subcellular location is the cytoplasm. The catalysed reaction is (S)-4-amino-5-oxopentanoate = 5-aminolevulinate. It functions in the pathway porphyrin-containing compound metabolism; protoporphyrin-IX biosynthesis; 5-aminolevulinate from L-glutamyl-tRNA(Glu): step 2/2. The sequence is that of Glutamate-1-semialdehyde 2,1-aminomutase from Erwinia tasmaniensis (strain DSM 17950 / CFBP 7177 / CIP 109463 / NCPPB 4357 / Et1/99).